The primary structure comprises 91 residues: UPF0250 protein PputW619_0619 (91 aa).

This sequence belongs to the UPF0250 family.

The sequence is that of UPF0250 protein PputW619_0619 from Pseudomonas putida (strain W619).